Reading from the N-terminus, the 299-residue chain is Inosose dehydratase (299 aa).

It belongs to the IolE/MocC family. It depends on glutathione as a cofactor. Co(2+) is required as a cofactor. Mn(2+) serves as cofactor.

It carries out the reaction scyllo-inosose = 3D-3,5/4-trihydroxycyclohexane-1,2-dione + H2O. Its function is as follows. Catalyzes the dehydration of inosose (2-keto-myo-inositol, 2KMI or 2,4,6/3,5-pentahydroxycyclohexanone) to 3D-(3,5/4)-trihydroxycyclohexane-1,2-dione (D-2,3-diketo-4-deoxy-epi-inositol). The sequence is that of Inosose dehydratase from Klebsiella pneumoniae subsp. pneumoniae (strain ATCC 700721 / MGH 78578).